Here is a 359-residue protein sequence, read N- to C-terminus: D-alanine--D-alanine ligase (359 aa).

Residues 141 to 346 (KRIFKEAGLP…YSTLLDELIN (206 aa)) form the ATP-grasp domain. 172 to 227 (IEHLGYPCFVKPANLGSSVGITKVHNEEELPGALKLAAKYDRKLLIERGIDAREIE) provides a ligand contact to ATP. Mg(2+) is bound by residues Asp-299, Glu-313, and Asn-315.

The protein belongs to the D-alanine--D-alanine ligase family. Mg(2+) serves as cofactor. Requires Mn(2+) as cofactor.

The protein localises to the cytoplasm. The catalysed reaction is 2 D-alanine + ATP = D-alanyl-D-alanine + ADP + phosphate + H(+). It participates in cell wall biogenesis; peptidoglycan biosynthesis. In terms of biological role, cell wall formation. This chain is D-alanine--D-alanine ligase, found in Thermoanaerobacter pseudethanolicus (strain ATCC 33223 / 39E) (Clostridium thermohydrosulfuricum).